The chain runs to 1042 residues: Ubiquitin carboxyl-terminal hydrolase 38 (1042 aa).

A USP domain is found at 445–949; the sequence is TGLINLGNTC…TAYVLLYKKQ (505 aa). Cysteine 454 acts as the Nucleophile in catalysis. Histidine 857 functions as the Proton acceptor in the catalytic mechanism.

It belongs to the peptidase C19 family. In terms of assembly, interacts with isoform 1 of FBXW7; this interaction prevents FBXW7-mediated degradation of MYC. As to expression, highly expressed in skeletal muscle. Expressed in adrenal gland.

Its subcellular location is the cytoplasm. It is found in the nucleus. It carries out the reaction Thiol-dependent hydrolysis of ester, thioester, amide, peptide and isopeptide bonds formed by the C-terminal Gly of ubiquitin (a 76-residue protein attached to proteins as an intracellular targeting signal).. Deubiquitinating enzyme that plays a role in various cellular processes, including DNA repair, cell cycle regulation, and immune response. Plays a role in the inhibition of type I interferon signaling by mediating the 'Lys-33' to 'Lys-48' ubiquitination transition of TBK1 leading to its degradation. Cleaves the ubiquitin chain from the histone demethylase LSD1/KDM1A and prevents it from degradation by the 26S proteasome, thus maintaining LSD1 protein level in cells. Plays a role in the DNA damage response by regulating the deacetylase activity of HDAC1. Mechanistically, removes the 'Lys-63'-linked ubiquitin chain promoting the deacetylase activity of HDAC1 in response to DNA damage. Also acts as a specific deubiquitinase of histone deacetylase 3/HDAC3 and cleaves its 'Lys-63'-linked ubiquitin chains to lower its histone deacetylase activity. Regulates MYC levels and cell proliferation via antagonizing ubiquitin E3 ligase FBXW7 thereby preventing MYC 'Lys-48'-linked ubiquitination and degradation. Participates in antiviral response by removing both 'Lys-48'-linked and 'Lys-63'-linked polyubiquitination of Zika virus envelope protein E. Constitutively associated with IL-33R/IL1RL1, deconjugates its 'Lys-27'-linked polyubiquitination resulting in its autophagic degradation. This is Ubiquitin carboxyl-terminal hydrolase 38 (USP38) from Homo sapiens (Human).